We begin with the raw amino-acid sequence, 61 residues long: uncharacterized protein (61 aa).

Residues 39–61 are disordered; it reads PRPFTPGLADPRRLGPRRVQAAQ.

This is an uncharacterized protein from Pan troglodytes (Chimpanzee).